Consider the following 453-residue polypeptide: Ribosomal protein uS12 methylthiotransferase RimO (453 aa).

Residues 5-120 (PKVGFVSLGC…VMQAVHSHLP (116 aa)) form the MTTase N-terminal domain. Residues Cys-14, Cys-50, Cys-79, Cys-151, Cys-155, and Cys-158 each coordinate [4Fe-4S] cluster. The region spanning 137 to 383 (LTPRHYAYLK…EVAEEVSAHR (247 aa)) is the Radical SAM core domain. The TRAM domain occupies 385-453 (QRKVGKTLKV…ADGHDLWGEV (69 aa)).

Belongs to the methylthiotransferase family. RimO subfamily. It depends on [4Fe-4S] cluster as a cofactor.

The protein localises to the cytoplasm. It carries out the reaction L-aspartate(89)-[ribosomal protein uS12]-hydrogen + (sulfur carrier)-SH + AH2 + 2 S-adenosyl-L-methionine = 3-methylsulfanyl-L-aspartate(89)-[ribosomal protein uS12]-hydrogen + (sulfur carrier)-H + 5'-deoxyadenosine + L-methionine + A + S-adenosyl-L-homocysteine + 2 H(+). Catalyzes the methylthiolation of an aspartic acid residue of ribosomal protein uS12. The polypeptide is Ribosomal protein uS12 methylthiotransferase RimO (Burkholderia cenocepacia (strain ATCC BAA-245 / DSM 16553 / LMG 16656 / NCTC 13227 / J2315 / CF5610) (Burkholderia cepacia (strain J2315))).